Here is a 432-residue protein sequence, read N- to C-terminus: Adenylosuccinate synthetase (432 aa).

Residues 13 to 19 (GDEGKGK) and 41 to 43 (GHT) each bind GTP. Catalysis depends on Asp14, which acts as the Proton acceptor. Asp14 and Gly41 together coordinate Mg(2+). IMP-binding positions include 14–17 (DEGK), 39–42 (NAGH), Thr131, Arg145, Gln226, Thr241, and Arg305. The Proton donor role is filled by His42. Substrate is bound at residue 301 to 307 (SVTGRAR). GTP is bound by residues Arg307, 333-335 (KLD), and 416-418 (STG).

This sequence belongs to the adenylosuccinate synthetase family. In terms of assembly, homodimer. Mg(2+) is required as a cofactor.

Its subcellular location is the cytoplasm. The catalysed reaction is IMP + L-aspartate + GTP = N(6)-(1,2-dicarboxyethyl)-AMP + GDP + phosphate + 2 H(+). It participates in purine metabolism; AMP biosynthesis via de novo pathway; AMP from IMP: step 1/2. Plays an important role in the de novo pathway of purine nucleotide biosynthesis. Catalyzes the first committed step in the biosynthesis of AMP from IMP. The sequence is that of Adenylosuccinate synthetase from Neisseria gonorrhoeae (strain ATCC 700825 / FA 1090).